Here is a 79-residue protein sequence, read N- to C-terminus: uncharacterized protein (79 aa).

This is an uncharacterized protein from Sulfolobus spindle-shape virus 1 (SSV1).